A 306-amino-acid chain; its full sequence is MKNKKMLKIGMCVGILGLSITSLVTFTGGALQVEAKEKTGQVKHKNQATHKEFSQLEKKFDARLGVYAIDTGTNQTIAYRPNERFAFASTYKALAAGVLLQQNSTKKLDEVITYTKEDLVDYSPVTEKHVDTGMTLGEIAEAAVRYSDNTAGNILFHKIGGPKGYEKALRKMGDRVTMSDRFETELNEAIPGDIRDTSTAKAIARNLKDFTVGNALPHQKRNILTEWMKGNATGDKLIRAGVPTDWVDADKSGAGSYGTRNDIAIVWPPNRSPIIIAILSSKDEKEATYDNQLIKEAAEVVIDAIK.

The signal sequence occupies residues 1-43 (MKNKKMLKIGMCVGILGLSITSLVTFTGGALQVEAKEKTGQVK). Residue S89 is the Acyl-ester intermediate of the active site. E185 (proton acceptor) is an active-site residue. Substrate is bound at residue 251–253 (KSG).

It belongs to the class-A beta-lactamase family.

It is found in the secreted. It carries out the reaction a beta-lactam + H2O = a substituted beta-amino acid. Functionally, acts preferentially on penicillins. In Bacillus cereus, this protein is Beta-lactamase 1 (penPC).